A 611-amino-acid polypeptide reads, in one-letter code: MAU2 chromatid cohesion factor homolog (611 aa).

TPR repeat units follow at residues 11-46, 91-124, 131-164, 371-404, and 490-523; these read YAGL…NPPP, FEAS…TSGE, FRLF…AEQC, PILH…ADNP, and ACSL…SGKI. The tract at residues 581 to 611 is disordered; it reads WTGAVSPTKSSTIPPQQSFQTWSQPGPSRLS. Residues 585–611 show a composition bias toward polar residues; sequence VSPTKSSTIPPQQSFQTWSQPGPSRLS.

It belongs to the SCC4/mau-2 family. As to quaternary structure, component of the cohesin loading complex.

The protein resides in the nucleus. It is found in the nucleoplasm. Functionally, required for association of the cohesin complex with chromatin during interphase. Plays a role in sister chromatid cohesion and normal progression through prometaphase. In Nematostella vectensis (Starlet sea anemone), this protein is MAU2 chromatid cohesion factor homolog.